The primary structure comprises 159 residues: Small ribosomal subunit protein uS17x (159 aa).

It belongs to the universal ribosomal protein uS17 family.

The protein localises to the cytoplasm. This Arabidopsis thaliana (Mouse-ear cress) protein is Small ribosomal subunit protein uS17x (RPS11C).